The primary structure comprises 162 residues: Interleukin-15 (162 aa).

Residues 1-29 (MRISKPHLRSVSIQCYLCLLLNSHFLTEA) form the signal peptide. The propeptide occupies 30–48 (GIHVFILGCFSAGLPKTEA). 2 cysteine pairs are disulfide-bonded: Cys-83–Cys-133 and Cys-90–Cys-136. Residue Asn-127 is glycosylated (N-linked (GlcNAc...) asparagine).

This sequence belongs to the IL-15/IL-21 family.

The protein resides in the secreted. Cytokine that plays a major role in the development of inflammatory and protective immune responses to microbial invaders and parasites by modulating immune cells of both the innate and adaptive immune systems. Stimulates the proliferation of natural killer cells, T-cells and B-cells and promotes the secretion of several cytokines. In monocytes, induces the production of IL8 and monocyte chemotactic protein 1/CCL2, two chemokines that attract neutrophils and monocytes respectively to sites of infection. Unlike most cytokines, which are secreted in soluble form, IL15 is expressed in association with its high affinity IL15RA on the surface of IL15-producing cells and delivers signals to target cells that express IL2RB and IL2RG receptor subunits. Binding to its receptor triggers the phosphorylation of JAK1 and JAK3 and the recruitment and subsequent phosphorylation of signal transducer and activator of transcription-3/STAT3 and STAT5. In mast cells, induces the rapid tyrosine phosphorylation of STAT6 and thereby controls mast cell survival and release of cytokines such as IL4. This Macaca thibetana (Pere David's macaque) protein is Interleukin-15 (IL15).